The primary structure comprises 277 residues: Tryptophan synthase alpha chain (277 aa).

Residues E50 and D61 each act as proton acceptor in the active site.

This sequence belongs to the TrpA family. Tetramer of two alpha and two beta chains.

It carries out the reaction (1S,2R)-1-C-(indol-3-yl)glycerol 3-phosphate + L-serine = D-glyceraldehyde 3-phosphate + L-tryptophan + H2O. It participates in amino-acid biosynthesis; L-tryptophan biosynthesis; L-tryptophan from chorismate: step 5/5. Functionally, the alpha subunit is responsible for the aldol cleavage of indoleglycerol phosphate to indole and glyceraldehyde 3-phosphate. The polypeptide is Tryptophan synthase alpha chain (Beijerinckia indica subsp. indica (strain ATCC 9039 / DSM 1715 / NCIMB 8712)).